Here is a 462-residue protein sequence, read N- to C-terminus: MLLVDKVAQRVVACAAFVVSGGVPTVAVALSGGRDSAALLHAVAAWRDAAGVPVRLVALHIHHGLQADADAWEAACARMAAAVGAAFRVRRVRVSTDAGRGIEEAAREARYAALDALCAETGATLLLTAHHLDDQAETVLLQLLRGAGLDGLSAMPMARERRVTLLRPWLDVPRGDIEAYARAHALAWVEDPSNGDARYARNALRPLLAGMAGHFPAYRASLARSAAHLAEAAALIEEVAQTDLARIAPAGTLAVAGLAALSGPRQRAALRAWLAGAGLRAVSSRRLEDLRAQLLGARADGAPCVRLPGAQVRRYRGQAWIEAAGQPGAGPADCPIAVSRFDPARAEVQRVDVAAWGGALLFSPAQAEGIDARILQAPLSLAARRGGERIVLRPGGPSRALKQAYQEAGIPAWARARLPLLYAGERLVFAAGLGPDRSAVAMGSGWHVAWLPAVGQDGLDAG.

31–36 provides a ligand contact to ATP; the sequence is SGGRDS.

The protein belongs to the tRNA(Ile)-lysidine synthase family.

It localises to the cytoplasm. The catalysed reaction is cytidine(34) in tRNA(Ile2) + L-lysine + ATP = lysidine(34) in tRNA(Ile2) + AMP + diphosphate + H(+). In terms of biological role, ligates lysine onto the cytidine present at position 34 of the AUA codon-specific tRNA(Ile) that contains the anticodon CAU, in an ATP-dependent manner. Cytidine is converted to lysidine, thus changing the amino acid specificity of the tRNA from methionine to isoleucine. The protein is tRNA(Ile)-lysidine synthase of Ralstonia nicotianae (strain ATCC BAA-1114 / GMI1000) (Ralstonia solanacearum).